The chain runs to 183 residues: Peptidyl-tRNA hydrolase (183 aa).

A tRNA-binding site is contributed by Tyr14. The active-site Proton acceptor is the His19. Residues Tyr61, Asn63, and Asn109 each coordinate tRNA.

Belongs to the PTH family. Monomer.

It localises to the cytoplasm. The enzyme catalyses an N-acyl-L-alpha-aminoacyl-tRNA + H2O = an N-acyl-L-amino acid + a tRNA + H(+). In terms of biological role, hydrolyzes ribosome-free peptidyl-tRNAs (with 1 or more amino acids incorporated), which drop off the ribosome during protein synthesis, or as a result of ribosome stalling. Catalyzes the release of premature peptidyl moieties from peptidyl-tRNA molecules trapped in stalled 50S ribosomal subunits, and thus maintains levels of free tRNAs and 50S ribosomes. The protein is Peptidyl-tRNA hydrolase of Aliarcobacter butzleri (strain RM4018) (Arcobacter butzleri).